Reading from the N-terminus, the 536-residue chain is T-complex protein 1 subunit delta (536 aa).

The span at 1 to 15 shows a compositional bias: polar residues; the sequence is MPEGKATSSASNTGK. The tract at residues 1 to 26 is disordered; the sequence is MPEGKATSSASNTGKNKGGAYQDRDK. G50 is a binding site for ADP. Residue G50 coordinates ATP. Mg(2+) is bound at residue D101. G102, T103, T104, S105, S170, K171, G422, and Q507 together coordinate ADP. Residues G102 and T103 each coordinate ATP. Residue K171 participates in ATP binding.

It belongs to the TCP-1 chaperonin family. In terms of assembly, component of the chaperonin-containing T-complex (TRiC), a hexadecamer composed of two identical back-to-back stacked rings enclosing a protein folding chamber. Each ring is made up of eight different subunits: TCP1/CCT1, CCT2, CCT3, CCT4, CCT5, CCT6A/CCT6, CCT7, CCT8.

The protein localises to the cytoplasm. The catalysed reaction is ATP + H2O = ADP + phosphate + H(+). Its function is as follows. Component of the chaperonin-containing T-complex (TRiC), a molecular chaperone complex that assists the folding of actin, tubulin and other proteins upon ATP hydrolysis. This is T-complex protein 1 subunit delta (cct4) from Takifugu rubripes (Japanese pufferfish).